A 288-amino-acid polypeptide reads, in one-letter code: Oxaloacetate decarboxylase (288 aa).

Residue Ser-47 participates in substrate binding. A Mg(2+)-binding site is contributed by Asp-85. Substrate contacts are provided by Arg-156 and His-232.

Belongs to the isocitrate lyase/PEP mutase superfamily. Oxaloacetate decarboxylase family. Homotetramer; dimer of dimers. It depends on Mg(2+) as a cofactor.

The enzyme catalyses oxaloacetate + H(+) = pyruvate + CO2. Its function is as follows. Catalyzes the decarboxylation of oxaloacetate into pyruvate. Seems to play a role in maintaining cellular concentrations of bicarbonate and pyruvate. The sequence is that of Oxaloacetate decarboxylase from Bradyrhizobium sp. (strain BTAi1 / ATCC BAA-1182).